The following is a 523-amino-acid chain: uncharacterized protein (523 aa).

Positions 1 to 14 are enriched in polar residues; sequence MAVSKNIKSNVSTH. 3 disordered regions span residues 1 to 36, 51 to 187, and 200 to 224; these read MAVS…VKKA, HSSE…VVSS, and QKQE…EMEK. Residues 87 to 97 show a composition bias toward basic and acidic residues; sequence DNRGTRLKGDI. 2 stretches are compositionally biased toward acidic residues: residues 117-130 and 138-182; these read DMEE…DNEY and QDDD…DDEN. The segment covering 200–210 has biased composition (basic and acidic residues); the sequence is QKQEKEEEKQP.

The protein belongs to the AATF family.

This is an uncharacterized protein from Dictyostelium discoideum (Social amoeba).